Here is a 228-residue protein sequence, read N- to C-terminus: ATP-dependent dethiobiotin synthetase BioD (228 aa).

12–17 is an ATP binding site; the sequence is EIGKTT. Mg(2+) is bound at residue Thr-16. Lys-37 is a catalytic residue. Ser-41 provides a ligand contact to substrate. Residues Asp-54, 116–119, and 205–207 each bind ATP; these read EGAG and PRL. Residues Asp-54 and Glu-116 each coordinate Mg(2+).

The protein belongs to the dethiobiotin synthetase family. Homodimer. Requires Mg(2+) as cofactor.

Its subcellular location is the cytoplasm. It catalyses the reaction (7R,8S)-7,8-diammoniononanoate + CO2 + ATP = (4R,5S)-dethiobiotin + ADP + phosphate + 3 H(+). It functions in the pathway cofactor biosynthesis; biotin biosynthesis; biotin from 7,8-diaminononanoate: step 1/2. Its function is as follows. Catalyzes a mechanistically unusual reaction, the ATP-dependent insertion of CO2 between the N7 and N8 nitrogen atoms of 7,8-diaminopelargonic acid (DAPA, also called 7,8-diammoniononanoate) to form a ureido ring. This Pseudomonas aeruginosa (strain ATCC 15692 / DSM 22644 / CIP 104116 / JCM 14847 / LMG 12228 / 1C / PRS 101 / PAO1) protein is ATP-dependent dethiobiotin synthetase BioD.